Consider the following 400-residue polypeptide: Tryptophan synthase beta chain (400 aa).

Lys-91 carries the N6-(pyridoxal phosphate)lysine modification.

It belongs to the TrpB family. As to quaternary structure, tetramer of two alpha and two beta chains. The cofactor is pyridoxal 5'-phosphate.

The catalysed reaction is (1S,2R)-1-C-(indol-3-yl)glycerol 3-phosphate + L-serine = D-glyceraldehyde 3-phosphate + L-tryptophan + H2O. It participates in amino-acid biosynthesis; L-tryptophan biosynthesis; L-tryptophan from chorismate: step 5/5. Its function is as follows. The beta subunit is responsible for the synthesis of L-tryptophan from indole and L-serine. In Listeria monocytogenes serotype 4b (strain CLIP80459), this protein is Tryptophan synthase beta chain.